We begin with the raw amino-acid sequence, 103 residues long: Small ribosomal subunit protein uS10 (103 aa).

This sequence belongs to the universal ribosomal protein uS10 family. As to quaternary structure, part of the 30S ribosomal subunit.

In terms of biological role, involved in the binding of tRNA to the ribosomes. The chain is Small ribosomal subunit protein uS10 from Burkholderia mallei (strain NCTC 10247).